The chain runs to 249 residues: Type III pantothenate kinase (249 aa).

6–13 (DAGNSRIK) contributes to the ATP binding site. Residues Phe-77 and 98–101 (GVDR) contribute to the substrate site. Asp-100 serves as the catalytic Proton acceptor. Residue Asp-121 participates in K(+) binding. Residue Ser-124 participates in ATP binding. Position 177 (Thr-177) interacts with substrate.

The protein belongs to the type III pantothenate kinase family. As to quaternary structure, homodimer. Requires NH4(+) as cofactor. The cofactor is K(+).

It localises to the cytoplasm. It carries out the reaction (R)-pantothenate + ATP = (R)-4'-phosphopantothenate + ADP + H(+). Its pathway is cofactor biosynthesis; coenzyme A biosynthesis; CoA from (R)-pantothenate: step 1/5. In terms of biological role, catalyzes the phosphorylation of pantothenate (Pan), the first step in CoA biosynthesis. In Teredinibacter turnerae (strain ATCC 39867 / T7901), this protein is Type III pantothenate kinase.